Here is a 217-residue protein sequence, read N- to C-terminus: Ribonuclease HII (217 aa).

Residues 27–216 enclose the RNase H type-2 domain; sequence SRIAGVDEAG…VKESIREGIC (190 aa). Asp33, Glu34, and Asp126 together coordinate a divalent metal cation.

This sequence belongs to the RNase HII family. It depends on Mn(2+) as a cofactor. The cofactor is Mg(2+).

It localises to the cytoplasm. It carries out the reaction Endonucleolytic cleavage to 5'-phosphomonoester.. Functionally, endonuclease that specifically degrades the RNA of RNA-DNA hybrids. This is Ribonuclease HII (rnhB) from Chlamydia muridarum (strain MoPn / Nigg).